Consider the following 363-residue polypeptide: MTLRAPPLSAIHERADASFTDFGGWEMPVEFESIRIEHEAVRSEAGKFDVSHMGQITVAGPDAATLTQRLTTNDVTVLDPGEAQYGAITDEDGIMLDDTVVYRLPEGAADEFLFIPNAGHDGEMTERWLSERDERGLDATVTNRTEEYAMIAVQGPDAPDLLSAETDVSLTALSRFEVAAGAVAGVDSLIARTGYTGEPGFEILCPPDDAGVVWDALECQPCGLGARDTLRLEMGFLLSGQEFHPVDEPRTPYEAGIGWTVKLDTEFVARDALEGVAADGPEEKLIGIELVDRGVPRHGYDVTTPDGEPIGHITSGTMSPTLGAPIALAYVPSAYAEPDKSVRVVVRGEPKKARTRSTPFLDR.

This sequence belongs to the GcvT family. As to quaternary structure, the glycine cleavage system is composed of four proteins: P, T, L and H.

It catalyses the reaction N(6)-[(R)-S(8)-aminomethyldihydrolipoyl]-L-lysyl-[protein] + (6S)-5,6,7,8-tetrahydrofolate = N(6)-[(R)-dihydrolipoyl]-L-lysyl-[protein] + (6R)-5,10-methylene-5,6,7,8-tetrahydrofolate + NH4(+). Its function is as follows. The glycine cleavage system catalyzes the degradation of glycine. The sequence is that of Probable aminomethyltransferase from Haloarcula marismortui (strain ATCC 43049 / DSM 3752 / JCM 8966 / VKM B-1809) (Halobacterium marismortui).